Reading from the N-terminus, the 213-residue chain is Amelotin (213 aa).

An N-terminal signal peptide occupies residues 1-16 (MKTMILLLCLLGSAQS). Disordered stretches follow at residues 22–43 (NPAS…LPQQ) and 162–213 (GAKA…NRTQ). A compositionally biased stretch (polar residues) spans 33–43 (TPGQVTPLPQQ). Low complexity predominate over residues 169-180 (GTTPGHVTTPGV).

The protein belongs to the amelotin family. Phosphorylated by FAM20C in vitro. Post-translationally, O-glycosylated. As to expression, specifically expressed in maturation-stage ameloblasts.

Its subcellular location is the secreted. Its function is as follows. Is a promoter of calcium phosphate mineralization, playing a critical role in the formation of the compact, mineralized, aprismatic enamel surface layer during the maturation stage of amelogenesis. In Mus musculus (Mouse), this protein is Amelotin (Amtn).